A 223-amino-acid polypeptide reads, in one-letter code: MARFEPYNYNNGHDPFFAHINQNPELINLDLPASTPSSFMLFSNGALVDANHNNSHFFPNLLHGNTRRKGNKEESGSKRRRKRSEEEEAMNGDETQKPKDVVHVRAKRGQATDSHSLAERVRREKINERLKCLQDLVPGCYKAMGMAVMLDVIIDYVRSLQNQIEFLSMKLSAASACYDLNSLDIEPTDIFQGGNIHSAAEMERILRESVGTQPPNFSSTLPF.

Positions 58-100 are disordered; it reads FPNLLHGNTRRKGNKEESGSKRRRKRSEEEEAMNGDETQKPKD. A bHLH domain is found at 110–160; the sequence is QATDSHSLAERVRREKINERLKCLQDLVPGCYKAMGMAVMLDVIIDYVRSL.

Homodimer. In terms of tissue distribution, expressed in leaves, stems, and flowers.

It localises to the nucleus. The polypeptide is Transcription factor bHLH75 (BHLH75) (Arabidopsis thaliana (Mouse-ear cress)).